The sequence spans 345 residues: MASSTGEKGLIVSFGEMLIDFVPTVSGVSLSESPGFLKAPGGAPANVAIAVSRLGGRAAFVGKLGDDDFGHMLAGILRKNGVDDQGINFDEGARTALAFVTLRSDGEREFMFYRNPSADMLLRPDELNLELIRSAKVFHYGSISLITEPCRSAHMKAMEVAKEAGALLSYDPNLREPLWPSPEEARTQIMSIWDKADIIKVSDVELEFLTENKTMDDKTAMSLWHPNLKLLLVTLGEKGCTYFTKKFHGSVETFHVDAVDTTGAGDSFVGALLQQIVDDQSVLEDEARLRKVLRFANACGAITTTKKGAIPALPTDIEALSFLKDQKKRQTNLKFSKWCCTASPC.

The protein belongs to the carbohydrate kinase PfkB family.

The enzyme catalyses D-fructose + ATP = D-fructose 6-phosphate + ADP + H(+). It participates in glycan biosynthesis; starch biosynthesis. Its function is as follows. May play an important role in maintaining the flux of carbon towards starch formation. This is Probable fructokinase-3 from Arabidopsis thaliana (Mouse-ear cress).